Here is a 418-residue protein sequence, read N- to C-terminus: 3-isopropylmalate dehydratase large subunit (418 aa).

[4Fe-4S] cluster contacts are provided by Cys-297, Cys-357, and Cys-360.

This sequence belongs to the aconitase/IPM isomerase family. LeuC type 2 subfamily. In terms of assembly, heterodimer of LeuC and LeuD. The cofactor is [4Fe-4S] cluster.

It catalyses the reaction (2R,3S)-3-isopropylmalate = (2S)-2-isopropylmalate. It functions in the pathway amino-acid biosynthesis; L-leucine biosynthesis; L-leucine from 3-methyl-2-oxobutanoate: step 2/4. Catalyzes the isomerization between 2-isopropylmalate and 3-isopropylmalate, via the formation of 2-isopropylmaleate. In Elusimicrobium minutum (strain Pei191), this protein is 3-isopropylmalate dehydratase large subunit.